Reading from the N-terminus, the 145-residue chain is Synaptojanin-2-binding protein (145 aa).

Residues 1–117 lie on the Cytoplasmic side of the membrane; sequence MNGRVDYLVS…VHRGDGEPSG (117 aa). One can recognise a PDZ domain in the interval 13–100; that stretch reads EINLTRGPSG…AVSLRVQHRL (88 aa). A helical transmembrane segment spans residues 118 to 138; the sequence is VPVAVVLLPVFALTLVAVWAF. Topologically, residues 139–145 are mitochondrial intermembrane; sequence VRYRKQL.

In terms of assembly, binds (via the PDZ domain) to isoform 2A of SYNJ2 (via the unique motif in the C-terminus). Interacts (via C-terminus) with RALBP1. Interacts (via PDZ domain) with ACVR2A (via C-terminus) and ACVR2B (via C-terminus). Forms a ternary complex with ACVR2A and RALBP1. Interacts with MAPK12. Interacts with DLL1; enhances DLL1 protein stability, and promotes notch signaling in endothelial cells. As to expression, widely expressed.

The protein localises to the mitochondrion outer membrane. Its function is as follows. Regulates endocytosis of activin type 2 receptor kinases through the Ral/RALBP1-dependent pathway and may be involved in suppression of activin-induced signal transduction. In Rattus norvegicus (Rat), this protein is Synaptojanin-2-binding protein (Synj2bp).